The sequence spans 262 residues: S-methyl-5'-thioadenosine phosphorylase (262 aa).

Phosphate-binding positions include serine 12, 54 to 55 (RH), and 87 to 88 (SA). Substrate is bound at residue methionine 185. Threonine 186 lines the phosphate pocket. 209 to 211 (DYD) contributes to the substrate binding site.

It belongs to the PNP/MTAP phosphorylase family. MTAP subfamily. As to quaternary structure, homohexamer. Dimer of a homotrimer.

The catalysed reaction is S-methyl-5'-thioadenosine + phosphate = 5-(methylsulfanyl)-alpha-D-ribose 1-phosphate + adenine. It participates in amino-acid biosynthesis; L-methionine biosynthesis via salvage pathway; S-methyl-5-thio-alpha-D-ribose 1-phosphate from S-methyl-5'-thioadenosine (phosphorylase route): step 1/1. Catalyzes the reversible phosphorylation of S-methyl-5'-thioadenosine (MTA) to adenine and 5-methylthioribose-1-phosphate. Involved in the breakdown of MTA, a major by-product of polyamine biosynthesis. Responsible for the first step in the methionine salvage pathway after MTA has been generated from S-adenosylmethionine. Has broad substrate specificity with 6-aminopurine nucleosides as preferred substrates. In Thermofilum pendens (strain DSM 2475 / Hrk 5), this protein is S-methyl-5'-thioadenosine phosphorylase.